Consider the following 610-residue polypeptide: Probable galacturonosyltransferase 5 (610 aa).

Residues 1 to 6 (MNQVRR) lie on the Cytoplasmic side of the membrane. A helical; Signal-anchor for type II membrane protein transmembrane segment spans residues 7–27 (WQRILILSLLLLSVLAPIVFV). Over 28-610 (SNRLKSITSV…PHLQRCNIHD (583 aa)) the chain is Lumenal. Positions 86–101 (LSNSSDKSNDTVQSNE) are enriched in polar residues. The segment at 86–170 (LSNSSDKSND…KNTRVQLERA (85 aa)) is disordered. Residues Asn88 and Asn94 are each glycosylated (N-linked (GlcNAc...) asparagine). Basic and acidic residues predominate over residues 110-123 (EVDKGNNHKPKEEQ). A compositionally biased stretch (polar residues) spans 124 to 135 (AVSQKTTVSSNA). The span at 139–170 (ISARDIQLNHKTEFRPPSSKSEKNTRVQLERA) shows a compositional bias: basic and acidic residues. 4 N-linked (GlcNAc...) asparagine glycosylation sites follow: Asn196, Asn338, Asn401, and Asn475.

The protein belongs to the glycosyltransferase 8 family. In terms of tissue distribution, expressed in roots, inflorescences, siliques, leaves and stems.

It is found in the golgi apparatus membrane. The protein operates within glycan metabolism; pectin biosynthesis. May be involved in pectin and/or xylans biosynthesis in cell walls. The chain is Probable galacturonosyltransferase 5 (GAUT5) from Arabidopsis thaliana (Mouse-ear cress).